The following is a 309-amino-acid chain: Aspartate carbamoyltransferase catalytic subunit (309 aa).

Arg58 and Thr59 together coordinate carbamoyl phosphate. Lys87 contributes to the L-aspartate binding site. 3 residues coordinate carbamoyl phosphate: Arg108, His136, and Gln139. L-aspartate contacts are provided by Arg168 and Arg229. Residues Leu268 and Pro269 each coordinate carbamoyl phosphate.

This sequence belongs to the aspartate/ornithine carbamoyltransferase superfamily. ATCase family. Heterooligomer of catalytic and regulatory chains.

It catalyses the reaction carbamoyl phosphate + L-aspartate = N-carbamoyl-L-aspartate + phosphate + H(+). It participates in pyrimidine metabolism; UMP biosynthesis via de novo pathway; (S)-dihydroorotate from bicarbonate: step 2/3. Catalyzes the condensation of carbamoyl phosphate and aspartate to form carbamoyl aspartate and inorganic phosphate, the committed step in the de novo pyrimidine nucleotide biosynthesis pathway. The chain is Aspartate carbamoyltransferase catalytic subunit from Methanosarcina mazei (strain ATCC BAA-159 / DSM 3647 / Goe1 / Go1 / JCM 11833 / OCM 88) (Methanosarcina frisia).